The primary structure comprises 188 residues: ATP synthase subunit b (188 aa).

A helical transmembrane segment spans residues 19 to 39 (LPAVYDIVWSAVVFVVLLVVI).

It belongs to the ATPase B chain family. F-type ATPases have 2 components, F(1) - the catalytic core - and F(0) - the membrane proton channel. F(1) has five subunits: alpha(3), beta(3), gamma(1), delta(1), epsilon(1). F(0) has three main subunits: a(1), b(2) and c(10-14). The alpha and beta chains form an alternating ring which encloses part of the gamma chain. F(1) is attached to F(0) by a central stalk formed by the gamma and epsilon chains, while a peripheral stalk is formed by the delta and b chains.

The protein resides in the cell membrane. F(1)F(0) ATP synthase produces ATP from ADP in the presence of a proton or sodium gradient. F-type ATPases consist of two structural domains, F(1) containing the extramembraneous catalytic core and F(0) containing the membrane proton channel, linked together by a central stalk and a peripheral stalk. During catalysis, ATP synthesis in the catalytic domain of F(1) is coupled via a rotary mechanism of the central stalk subunits to proton translocation. In terms of biological role, component of the F(0) channel, it forms part of the peripheral stalk, linking F(1) to F(0). In Clavibacter michiganensis subsp. michiganensis (strain NCPPB 382), this protein is ATP synthase subunit b.